Reading from the N-terminus, the 121-residue chain is Small ribosomal subunit protein uS13 (121 aa).

The interval 97 to 121 is disordered; the sequence is VRGQRTRTNARTRRGARKTVAGRKK. Residues 100 to 121 are compositionally biased toward basic residues; it reads QRTRTNARTRRGARKTVAGRKK.

Belongs to the universal ribosomal protein uS13 family. In terms of assembly, part of the 30S ribosomal subunit. Forms a loose heterodimer with protein S19. Forms two bridges to the 50S subunit in the 70S ribosome.

Its function is as follows. Located at the top of the head of the 30S subunit, it contacts several helices of the 16S rRNA. In the 70S ribosome it contacts the 23S rRNA (bridge B1a) and protein L5 of the 50S subunit (bridge B1b), connecting the 2 subunits; these bridges are implicated in subunit movement. Contacts the tRNAs in the A and P-sites. The polypeptide is Small ribosomal subunit protein uS13 (Prochlorococcus marinus (strain NATL2A)).